The sequence spans 186 residues: Alkyl hydroperoxide reductase AhpD (186 aa).

The active-site Proton donor is the cysteine 131. Cysteine 131 and cysteine 134 form a disulfide bridge. Cysteine 134 serves as the catalytic Cysteine sulfenic acid (-SOH) intermediate.

This sequence belongs to the AhpD family.

The catalysed reaction is N(6)-[(R)-dihydrolipoyl]-L-lysyl-[lipoyl-carrier protein] + a hydroperoxide = N(6)-[(R)-lipoyl]-L-lysyl-[lipoyl-carrier protein] + an alcohol + H2O. In terms of biological role, antioxidant protein with alkyl hydroperoxidase activity. Required for the reduction of the AhpC active site cysteine residues and for the regeneration of the AhpC enzyme activity. The protein is Alkyl hydroperoxide reductase AhpD of Rhodospirillum centenum (strain ATCC 51521 / SW).